Reading from the N-terminus, the 86-residue chain is MANIKSQKKRILTNEKARLRNNAVKSELKTAIRAVNTAVESADKDAAGTALVAASRKLDKAVSKGVIHKNNAANRKSAISKKVNAL.

This sequence belongs to the bacterial ribosomal protein bS20 family.

Its function is as follows. Binds directly to 16S ribosomal RNA. This chain is Small ribosomal subunit protein bS20, found in Paenarthrobacter aurescens (strain TC1).